We begin with the raw amino-acid sequence, 314 residues long: Probable dimethyladenosine transferase (314 aa).

S-adenosyl-L-methionine is bound by residues H36, L38, G63, E84, D112, and N127.

It belongs to the class I-like SAM-binding methyltransferase superfamily. rRNA adenine N(6)-methyltransferase family. As to quaternary structure, part of the small subunit (SSU) processome, composed of more than 70 proteins and the RNA chaperone small nucleolar RNA (snoRNA) U3.

The protein resides in the nucleus. It is found in the nucleoplasm. The protein localises to the nucleolus. It catalyses the reaction adenosine(1779)/adenosine(1780) in 18S rRNA + 4 S-adenosyl-L-methionine = N(6)-dimethyladenosine(1779)/N(6)-dimethyladenosine(1780) in 18S rRNA + 4 S-adenosyl-L-homocysteine + 4 H(+). Specifically dimethylates two adjacent adenosines in the loop of a conserved hairpin near the 3'-end of 18S rRNA in the 40S particle. Involved in the pre-rRNA processing steps leading to small-subunit rRNA production independently of its RNA-modifying catalytic activity. Part of the small subunit (SSU) processome, first precursor of the small eukaryotic ribosomal subunit. During the assembly of the SSU processome in the nucleolus, many ribosome biogenesis factors, an RNA chaperone and ribosomal proteins associate with the nascent pre-rRNA and work in concert to generate RNA folding, modifications, rearrangements and cleavage as well as targeted degradation of pre-ribosomal RNA by the RNA exosome. This chain is Probable dimethyladenosine transferase (dimt1), found in Dictyostelium discoideum (Social amoeba).